The primary structure comprises 115 residues: Mediator of RNA polymerase II transcription subunit 22 (115 aa).

Belongs to the Mediator complex subunit 22 family. In terms of assembly, component of the Mediator complex.

The protein resides in the nucleus. Its function is as follows. Component of the Mediator complex, a coactivator involved in the regulated transcription of nearly all RNA polymerase II-dependent genes. Mediator functions as a bridge to convey information from gene-specific regulatory proteins to the basal RNA polymerase II transcription machinery. Mediator is recruited to promoters by direct interactions with regulatory proteins and serves as a scaffold for the assembly of a functional preinitiation complex with RNA polymerase II and the general transcription factors. The polypeptide is Mediator of RNA polymerase II transcription subunit 22 (SRB6) (Candida albicans (strain SC5314 / ATCC MYA-2876) (Yeast)).